Reading from the N-terminus, the 465-residue chain is Alpha-2A adrenergic receptor (465 aa).

Residues 1 to 48 (MFRQEQPLAEGSFAPMGSLQPDAGNSSWNGTEAPGGGTRATPYSLQVT) are Extracellular-facing. N-linked (GlcNAc...) asparagine glycosylation is found at N25 and N29. A helical membrane pass occupies residues 49–74 (LTLVCLAGLLMLFTVFGNVLVIIAVF). Over 75–85 (TSRALKAPQNL) the chain is Cytoplasmic. Residues 86 to 111 (FLVSLASADILVATLVIPFSLANEVM) form a helical membrane-spanning segment. Over 112-121 (GYWYFGKVWC) the chain is Extracellular. C121 and C203 are joined by a disulfide. A helical transmembrane segment spans residues 122-144 (EIYLALDVLFCTSSIVHLCAISL). At 145–164 (DRYWSITQAIEYNLKRTPRR) the chain is on the cytoplasmic side. Residues 165-188 (IKAIIVTVWVISAVISFPPLISIE) form a helical membrane-spanning segment. Over 189–207 (KKGAGGGQQPAEPSCKIND) the chain is Extracellular. Residues 208–232 (QKWYVISSSIGSFFAPCLIMILVYV) form a helical membrane-spanning segment. Topologically, residues 233–389 (RIYQIAKRRT…RQNREKRFTF (157 aa)) are cytoplasmic. The segment at 242–378 (TRVPPSRRGP…GGGAKASRWR (137 aa)) is disordered. The span at 313–330 (SSEHAERPPGPRRPDRGP) shows a compositional bias: basic and acidic residues. S346 carries the post-translational modification Phosphoserine. Residues 353–363 (GAAGPGASGSG) show a composition bias toward gly residues. R368 carries the post-translational modification Omega-N-methylarginine. A helical transmembrane segment spans residues 390–414 (VLAVVIGVFVVCWFPFFFTYTLIAV). Residues 415-424 (GCPVPSQLFN) are Extracellular-facing. A helical transmembrane segment spans residues 425–445 (FFFWFGYCNSSLNPVIYTIFN). Topologically, residues 446-465 (HDFRRAFKKILCRGDRKRIV) are cytoplasmic. C457 carries the S-palmitoyl cysteine lipid modification.

It belongs to the G-protein coupled receptor 1 family. Adrenergic receptor subfamily. ADRA2A sub-subfamily.

The protein localises to the cell membrane. Functionally, alpha-2 adrenergic receptors mediate the catecholamine-induced inhibition of adenylate cyclase through the action of G proteins. The chain is Alpha-2A adrenergic receptor from Mus musculus (Mouse).